Consider the following 922-residue polypeptide: Neuropilin-1 (922 aa).

The signal sequence occupies residues 1-21 (MERGLPLLCATLALALALAGA). Over 22–855 (FRSDKCGGTI…PGNVLKTLDP (834 aa)) the chain is Extracellular. 3 cysteine pairs are disulfide-bonded: cysteine 27–cysteine 54, cysteine 82–cysteine 104, and cysteine 147–cysteine 173. CUB domains lie at 27–141 (CGGT…YEIF) and 147–265 (CSQN…YSVL). N-linked (GlcNAc...) asparagine glycosylation is present at asparagine 150. Ca(2+) contacts are provided by glutamate 195, aspartate 209, and aspartate 250. An intrachain disulfide couples cysteine 206 to cysteine 228. Asparagine 261, asparagine 300, and asparagine 522 each carry an N-linked (GlcNAc...) asparagine glycan. Intrachain disulfides connect cysteine 275–cysteine 424 and cysteine 431–cysteine 583. F5/8 type C domains are found at residues 275–424 (CMEA…VYGC) and 431–583 (CSGM…LLGC). The O-linked (Xyl...) (chondroitin sulfate) serine; alternate glycan is linked to serine 612. A glycan (O-linked (Xyl...) (heparan sulfate) serine; alternate) is linked at serine 612. The MAM domain maps to 645–811 (TYGFNCEFGW…NHIPQEDCAK (167 aa)). O-linked (Xyl...) (chondroitin sulfate) serine glycosylation occurs at serine 829. N-linked (GlcNAc...) asparagine glycosylation occurs at asparagine 841. The chain crosses the membrane as a helical span at residues 856–880 (ILITIIAMSALGVLLGAVCGVVLYC). Residues 881 to 922 (ACWHNGMSERNLSALENYNFELVDGVKLKKDKLNPQSNYSEA) lie on the Cytoplasmic side of the membrane. The residue at position 893 (serine 893) is a Phosphoserine.

It belongs to the neuropilin family. As to quaternary structure, homodimer, and heterodimer with NRP2. Binds PLXNB1. Interacts with FER. Interacts with VEGFA. Interacts with ABCB8/MITOSUR in mitochondria. Found in the embryonic nervous system. Expressed in dorsal root ganglia.

It localises to the mitochondrion membrane. The protein localises to the cell membrane. It is found in the cytoplasm. Functionally, cell-surface receptor involved in the development of the cardiovascular system, in angiogenesis, in the formation of certain neuronal circuits and in organogenesis outside the nervous system. Mediates the chemorepulsant activity of semaphorins. Recognizes a C-end rule (CendR) motif R/KXXR/K on its ligands which causes cellular internalization and vascular leakage. It binds to semaphorin 3A, the PLGF-2 isoform of PGF, the VEGF165 isoform of VEGFA and VEGFB. Coexpression with KDR results in increased VEGF165 binding to KDR as well as increased chemotaxis. Regulates VEGF-induced angiogenesis. Binding to VEGFA initiates a signaling pathway needed for motor neuron axon guidance and cell body migration, including for the caudal migration of facial motor neurons from rhombomere 4 to rhombomere 6 during embryonic development. Regulates mitochondrial iron transport via interaction with ABCB8/MITOSUR. The sequence is that of Neuropilin-1 (Nrp1) from Rattus norvegicus (Rat).